The following is a 303-amino-acid chain: Tyrosine-protein phosphatase 3 (303 aa).

Positions 24–292 constitute a Tyrosine-protein phosphatase domain; that stretch reads YMIIEGLNEE…VFLYTVSQEL (269 aa). Cysteine 227 serves as the catalytic Phosphocysteine intermediate.

Belongs to the protein-tyrosine phosphatase family. Non-receptor class subfamily.

The protein resides in the cytoplasm. The catalysed reaction is O-phospho-L-tyrosyl-[protein] + H2O = L-tyrosyl-[protein] + phosphate. Functionally, contributes to dephosphorylation of tyrosine 15 of cdc2. The polypeptide is Tyrosine-protein phosphatase 3 (pyp3) (Schizosaccharomyces pombe (strain 972 / ATCC 24843) (Fission yeast)).